A 511-amino-acid polypeptide reads, in one-letter code: Maturase K (511 aa).

Belongs to the intron maturase 2 family. MatK subfamily.

The protein localises to the plastid. It is found in the chloroplast. Functionally, usually encoded in the trnK tRNA gene intron. Probably assists in splicing its own and other chloroplast group II introns. In Hordeum murinum subsp. leporinum (Mouse barley), this protein is Maturase K.